The chain runs to 218 residues: Adenylate kinase (218 aa).

10 to 15 contacts ATP; the sequence is GAGKGT. Residues 30–59 are NMP; that stretch reads STGDMLRAAVKAGTPLGLQAKAVMDSGSLV. AMP-binding positions include threonine 31, arginine 36, 57–59, 85–88, and glutamine 92; these read SLV and GFPR. Positions 122-159 are LID; sequence GRRSHPASGRTYHVRFNPPKIDGKDDLTGEALLQREDD. ATP contacts are provided by residues arginine 123 and 132–133; that span reads TY. 2 residues coordinate AMP: arginine 156 and arginine 167. Position 203 (glycine 203) interacts with ATP.

It belongs to the adenylate kinase family. As to quaternary structure, monomer.

Its subcellular location is the cytoplasm. The enzyme catalyses AMP + ATP = 2 ADP. It functions in the pathway purine metabolism; AMP biosynthesis via salvage pathway; AMP from ADP: step 1/1. Its function is as follows. Catalyzes the reversible transfer of the terminal phosphate group between ATP and AMP. Plays an important role in cellular energy homeostasis and in adenine nucleotide metabolism. The chain is Adenylate kinase from Verminephrobacter eiseniae (strain EF01-2).